A 77-amino-acid polypeptide reads, in one-letter code: Acyl carrier protein (77 aa).

Residues 1 to 76 (MSLEDDVKAI…DVIKYIQERQ (76 aa)) form the Carrier domain. Ser36 is modified (O-(pantetheine 4'-phosphoryl)serine).

It belongs to the acyl carrier protein (ACP) family. 4'-phosphopantetheine is transferred from CoA to a specific serine of apo-ACP by AcpS. This modification is essential for activity because fatty acids are bound in thioester linkage to the sulfhydryl of the prosthetic group.

The protein localises to the cytoplasm. Its pathway is lipid metabolism; fatty acid biosynthesis. Its function is as follows. Carrier of the growing fatty acid chain in fatty acid biosynthesis. In Chlamydia trachomatis serovar A (strain ATCC VR-571B / DSM 19440 / HAR-13), this protein is Acyl carrier protein.